The primary structure comprises 456 residues: Hydroxyproline dehydrogenase (456 aa).

An N6-acetyllysine mark is found at K310 and K320.

The protein belongs to the proline oxidase family. The cofactor is FAD.

The enzyme catalyses trans-4-hydroxy-L-proline + a quinone = (3R,5S)-1-pyrroline-3-hydroxy-5-carboxylate + a quinol + H(+). The catalysed reaction is L-proline + a quinone = (S)-1-pyrroline-5-carboxylate + a quinol + H(+). In terms of biological role, dehydrogenase that converts trans-4-L-hydroxyproline to delta-1-pyrroline-3-hydroxy-5-carboxylate (Hyp) using ubiquinone-10 as the terminal electron acceptor. Can also use proline as a substrate but with a very much lower efficiency. Does not react with other diastereomers of Hyp: trans-4-D-hydroxyproline and cis-4-L-hydroxyproline. Ubiquininone analogs such as menadione, duroquinone and ubiquinone-1 react more efficiently than oxygen as the terminal electron acceptor during catalysis. This Rattus norvegicus (Rat) protein is Hydroxyproline dehydrogenase.